Consider the following 808-residue polypeptide: Digalactosyldiacylglycerol synthase 1, chloroplastic (808 aa).

Residues 1–23 are disordered; it reads MVKETLIPPSSTSMTTGTSSSSS. The transit peptide at 1–58 directs the protein to the chloroplast; sequence MVKETLIPPSSTSMTTGTSSSSSLSMTLSSTNALSFLSKGWREVWDSADADLQLMRDR. Positions 10 to 23 are enriched in low complexity; the sequence is SSTSMTTGTSSSSS.

Belongs to the glycosyltransferase group 1 family. Glycosyltransferase 4 subfamily.

It is found in the plastid. The protein localises to the chloroplast outer membrane. The enzyme catalyses a 1,2-diacyl-3-O-(beta-D-galactosyl)-sn-glycerol + UDP-alpha-D-galactose = a 1,2-diacyl-3-O-[alpha-D-galactosyl-(1-&gt;6)-beta-D-galactosyl]-sn-glycerol + UDP + H(+). In terms of biological role, involved in the synthesis of diacylglycerol galactolipids that are specifically found in thylakoid membranes. Specific for alpha-glycosidic linkages. Responsible for the final assembly of galactolipids in photosynthetic membranes. Digalactosyldiacylglycerol (DGDG) provides stability to the photosystem I (PSI) complex, especially to the PsaA, PsaB, PsaC, PsaL and PsaH subunits. This chain is Digalactosyldiacylglycerol synthase 1, chloroplastic, found in Arabidopsis thaliana (Mouse-ear cress).